A 465-amino-acid chain; its full sequence is Methylenetetrahydrofolate--tRNA-(uracil-5-)-methyltransferase TrmFO (465 aa).

An FAD-binding site is contributed by 3–8 (GAGLAG).

This sequence belongs to the MnmG family. TrmFO subfamily. Requires FAD as cofactor.

The protein localises to the cytoplasm. The catalysed reaction is uridine(54) in tRNA + (6R)-5,10-methylene-5,6,7,8-tetrahydrofolate + NADH + H(+) = 5-methyluridine(54) in tRNA + (6S)-5,6,7,8-tetrahydrofolate + NAD(+). It catalyses the reaction uridine(54) in tRNA + (6R)-5,10-methylene-5,6,7,8-tetrahydrofolate + NADPH + H(+) = 5-methyluridine(54) in tRNA + (6S)-5,6,7,8-tetrahydrofolate + NADP(+). Its function is as follows. Catalyzes the folate-dependent formation of 5-methyl-uridine at position 54 (M-5-U54) in all tRNAs. This is Methylenetetrahydrofolate--tRNA-(uracil-5-)-methyltransferase TrmFO from Bradyrhizobium sp. (strain ORS 278).